A 183-amino-acid polypeptide reads, in one-letter code: Adenine phosphoribosyltransferase (183 aa).

Belongs to the purine/pyrimidine phosphoribosyltransferase family. In terms of assembly, homodimer.

Its subcellular location is the cytoplasm. The catalysed reaction is AMP + diphosphate = 5-phospho-alpha-D-ribose 1-diphosphate + adenine. It participates in purine metabolism; AMP biosynthesis via salvage pathway; AMP from adenine: step 1/1. Its function is as follows. Catalyzes a salvage reaction resulting in the formation of AMP, that is energically less costly than de novo synthesis. In Cronobacter sakazakii (strain ATCC BAA-894) (Enterobacter sakazakii), this protein is Adenine phosphoribosyltransferase.